Reading from the N-terminus, the 284-residue chain is 3-methyl-2-oxobutanoate hydroxymethyltransferase (284 aa).

Positions 52 and 91 each coordinate Mg(2+). 3-methyl-2-oxobutanoate-binding positions include 52 to 53 (DS), aspartate 91, and lysine 121. Glutamate 123 contributes to the Mg(2+) binding site. The active-site Proton acceptor is the glutamate 191.

This sequence belongs to the PanB family. Homodecamer; pentamer of dimers. Requires Mg(2+) as cofactor.

The protein localises to the cytoplasm. The enzyme catalyses 3-methyl-2-oxobutanoate + (6R)-5,10-methylene-5,6,7,8-tetrahydrofolate + H2O = 2-dehydropantoate + (6S)-5,6,7,8-tetrahydrofolate. It participates in cofactor biosynthesis; (R)-pantothenate biosynthesis; (R)-pantoate from 3-methyl-2-oxobutanoate: step 1/2. Catalyzes the reversible reaction in which hydroxymethyl group from 5,10-methylenetetrahydrofolate is transferred onto alpha-ketoisovalerate to form ketopantoate. The polypeptide is 3-methyl-2-oxobutanoate hydroxymethyltransferase (Deinococcus radiodurans (strain ATCC 13939 / DSM 20539 / JCM 16871 / CCUG 27074 / LMG 4051 / NBRC 15346 / NCIMB 9279 / VKM B-1422 / R1)).